Consider the following 271-residue polypeptide: Type III pantothenate kinase (271 aa).

6–13 (DVRNTNIV) contacts ATP. 109-112 (GADR) provides a ligand contact to substrate. The Proton acceptor role is filled by D111. D131 contacts K(+). Residue T134 participates in ATP binding. Substrate is bound at residue T186.

This sequence belongs to the type III pantothenate kinase family. Homodimer. NH4(+) serves as cofactor. It depends on K(+) as a cofactor.

It is found in the cytoplasm. It catalyses the reaction (R)-pantothenate + ATP = (R)-4'-phosphopantothenate + ADP + H(+). It participates in cofactor biosynthesis; coenzyme A biosynthesis; CoA from (R)-pantothenate: step 1/5. Functionally, catalyzes the phosphorylation of pantothenate (Pan), the first step in CoA biosynthesis. This chain is Type III pantothenate kinase, found in Rhodococcus erythropolis (strain PR4 / NBRC 100887).